A 317-amino-acid chain; its full sequence is 4-hydroxy-3-methylbut-2-enyl diphosphate reductase (317 aa).

Residue C12 coordinates [4Fe-4S] cluster. H43 and H81 together coordinate (2E)-4-hydroxy-3-methylbut-2-enyl diphosphate. Positions 43 and 81 each coordinate dimethylallyl diphosphate. The isopentenyl diphosphate site is built by H43 and H81. Residue C103 participates in [4Fe-4S] cluster binding. H131 is a (2E)-4-hydroxy-3-methylbut-2-enyl diphosphate binding site. H131 contributes to the dimethylallyl diphosphate binding site. Residue H131 coordinates isopentenyl diphosphate. The active-site Proton donor is E133. T172 contacts (2E)-4-hydroxy-3-methylbut-2-enyl diphosphate. Residue C200 coordinates [4Fe-4S] cluster. S228, N230, and S273 together coordinate (2E)-4-hydroxy-3-methylbut-2-enyl diphosphate. 3 residues coordinate dimethylallyl diphosphate: S228, N230, and S273. 3 residues coordinate isopentenyl diphosphate: S228, N230, and S273.

It belongs to the IspH family. [4Fe-4S] cluster serves as cofactor.

It catalyses the reaction isopentenyl diphosphate + 2 oxidized [2Fe-2S]-[ferredoxin] + H2O = (2E)-4-hydroxy-3-methylbut-2-enyl diphosphate + 2 reduced [2Fe-2S]-[ferredoxin] + 2 H(+). It carries out the reaction dimethylallyl diphosphate + 2 oxidized [2Fe-2S]-[ferredoxin] + H2O = (2E)-4-hydroxy-3-methylbut-2-enyl diphosphate + 2 reduced [2Fe-2S]-[ferredoxin] + 2 H(+). It functions in the pathway isoprenoid biosynthesis; dimethylallyl diphosphate biosynthesis; dimethylallyl diphosphate from (2E)-4-hydroxy-3-methylbutenyl diphosphate: step 1/1. It participates in isoprenoid biosynthesis; isopentenyl diphosphate biosynthesis via DXP pathway; isopentenyl diphosphate from 1-deoxy-D-xylulose 5-phosphate: step 6/6. Functionally, catalyzes the conversion of 1-hydroxy-2-methyl-2-(E)-butenyl 4-diphosphate (HMBPP) into a mixture of isopentenyl diphosphate (IPP) and dimethylallyl diphosphate (DMAPP). Acts in the terminal step of the DOXP/MEP pathway for isoprenoid precursor biosynthesis. This Exiguobacterium sp. (strain ATCC BAA-1283 / AT1b) protein is 4-hydroxy-3-methylbut-2-enyl diphosphate reductase.